Here is a 75-residue protein sequence, read N- to C-terminus: Small ribosomal subunit protein bS18 (75 aa).

Belongs to the bacterial ribosomal protein bS18 family. As to quaternary structure, part of the 30S ribosomal subunit. Forms a tight heterodimer with protein bS6.

In terms of biological role, binds as a heterodimer with protein bS6 to the central domain of the 16S rRNA, where it helps stabilize the platform of the 30S subunit. The polypeptide is Small ribosomal subunit protein bS18 (Baumannia cicadellinicola subsp. Homalodisca coagulata).